We begin with the raw amino-acid sequence, 421 residues long: Probable 26S proteasome regulatory subunit rpn6 (421 aa).

Residues Asp-221–Gln-390 form the PCI domain.

Belongs to the proteasome subunit S9 family. In terms of assembly, component of the lid subcomplex of the 19S proteasome regulatory particle complex (also named PA700 complex). The 26S proteasome consists of a 20S proteasome core and two 19S regulatory subunits.

In terms of biological role, component of the lid subcomplex of the 26S proteasome, a multiprotein complex involved in the ATP-dependent degradation of ubiquitinated proteins. In the complex, rpn6 is required for proteasome assembly. This Schizosaccharomyces pombe (strain 972 / ATCC 24843) (Fission yeast) protein is Probable 26S proteasome regulatory subunit rpn6 (rpn6).